We begin with the raw amino-acid sequence, 176 residues long: Scytalone dehydratase-like protein AacuK (176 aa).

The substrate site is built by tyrosine 26 and tyrosine 46. Active-site residues include histidine 81 and histidine 107.

This sequence belongs to the scytalone dehydratase family.

Its pathway is secondary metabolite biosynthesis. Scytalone dehydratase-like protein; part of the gene cluster that mediates the biosynthesis of the tetrahydroxanthone dimer secalonic acid D. The pathway begins with the synthesis of atrochrysone thioester by the polyketide synthase AacuL. The atrochrysone carboxyl ACP thioesterase AacuM then breaks the thioester bond and releases the atrochrysone carboxylic acid from AacuL. Atrochrysone carboxylic acid is decarboxylated by the decarboxylase AacuI, and oxidized by the anthrone oxygenase AacuG to yield emodin. Emodin is then reduced to emodin hydroquinone by a yet unidentified oxidoreductase. A-ring reduction by the short chain dehydrogenase AacuN, dehydration by the scytalone dehydratase-like protein AacuK and probable spontaneous re-oxidation, results in overall deoxygenation to chrysophanol. Baeyer-Villiger oxidation by the Baeyer-Villiger monooxygenase (BVMO) AacuH then yields monodictyphenone. Monodictyphenone is transformed into compounds with the tetrahydroxanthone skeleton via methylesterification by the methyltransferase AacuQ, followed by the action of the flavin-dependent monooxygenase AacuC, the isomerase AacuP, and the short chain dehydrogenase/reductase AacuF or AacuD. AacuF and AacuD should accept the same compound as a substrate but perform the ketoreduction with a different stereoselectivity, thus yielding blennolides B and A, respectively. In the final step of the biosynthesis, the cytochrome P450 monooxygenase AacuE accepts blennolide B and/or blennolide A to conduct the dimerization reaction to furnish the tetrahydroxanthone dimers, secalonic acids D, B, and F. This chain is Scytalone dehydratase-like protein AacuK, found in Aspergillus aculeatus (strain ATCC 16872 / CBS 172.66 / WB 5094).